Consider the following 426-residue polypeptide: Cdc25-like protein phosphatase twine (426 aa).

Positions 1–27 (MASKRLMLDVEEEDDESGACGQENFDP) are disordered. One can recognise a Rhodanese domain in the interval 265–371 (SQGGYEIIDC…FFGLYSQLCQ (107 aa)). Cys-318 is an active-site residue.

The protein belongs to the MPI phosphatase family. As to expression, expressed in developing male and female germ cells.

The enzyme catalyses O-phospho-L-tyrosyl-[protein] + H2O = L-tyrosyl-[protein] + phosphate. Required during meiosis. Regulates the transition from the extended G2 phase to the onset of the first meiotic division. The polypeptide is Cdc25-like protein phosphatase twine (twe) (Drosophila melanogaster (Fruit fly)).